The chain runs to 1164 residues: Hamartin (1164 aa).

A Glycyl lysine isopeptide (Lys-Gly) (interchain with G-Cter in ubiquitin) cross-link involves residue Lys30. The interval 403 to 787 (SDDYVHISLP…QIRQLQHDRE (385 aa)) is mediates interaction with WDR45B. Residues 439–571 (LNDRGSEEPP…ADESPAGDRE (133 aa)) form a disordered region. Basic and acidic residues predominate over residues 474–487 (EKDKEEAAISRELS). Ser487, Ser505, Ser511, Ser521, and Ser598 each carry phosphoserine. Polar residues predominate over residues 513 to 530 (PGSQRKTHSAASSSQGAS). The stretch at 721–997 (RKVIKAAALE…AAEERLDCCN (277 aa)) forms a coiled coil. The interval 1006–1085 (GHNEEASGHN…TTVGSLPSSK (80 aa)) is disordered. The segment covering 1007–1020 (HNEEASGHNGETKT) has biased composition (basic and acidic residues). The span at 1073-1085 (SIPTTVGSLPSSK) shows a compositional bias: polar residues. Residue Ser1100 is modified to Phosphoserine. Residues 1131–1164 (IPLNLDGPHPSPPTPDSVGQLHIMDYNETHHEHS) are disordered. Residues 1155 to 1164 (DYNETHHEHS) are compositionally biased toward basic and acidic residues.

As to quaternary structure, component of the TSC-TBC complex (also named Rhebulator complex), composed of 2 molecules of TSC1, 2 molecules of TSC2 and 1 molecule of TBC1D7. Probably forms a complex composed of chaperones HSP90 and HSP70, co-chaperones STIP1/HOP, CDC37, PPP5C, PTGES3/p23, TSC1 and client protein TSC2. Forms a complex composed of chaperones HSP90 and HSP70, co-chaperones CDC37, PPP5C, TSC1 and client protein TSC2, CDK4, AKT, RAF1 and NR3C1; this complex does not contain co-chaperones STIP1/HOP and PTGES3/p23. Forms a complex containing HSP90AA1, TSC1 and TSC2; TSC1 is required to recruit TCS2 to the complex. Interacts (via C-terminus) with the closed form of HSP90AA1 (via the middle domain and TPR repeat-binding motif). Interacts with DOCK7. Interacts with FBXW5. Interacts with WDR45B. Interacts with RPAP3 and URI1. Phosphorylation at Ser-505 does not affect interaction with TSC2. Post-translationally, 'Lys-63'-linked ubiquitinated at Lys-30 by PELI1; the ubiquitination promotes TSC1/TSC2 complex stability. Highly expressed in skeletal muscle, followed by heart, brain, placenta, pancreas, lung, liver and kidney. Also expressed in embryonic kidney cells.

The protein resides in the lysosome membrane. Its subcellular location is the cytoplasm. It is found in the cytosol. Non-catalytic component of the TSC-TBC complex, a multiprotein complex that acts as a negative regulator of the canonical mTORC1 complex, an evolutionarily conserved central nutrient sensor that stimulates anabolic reactions and macromolecule biosynthesis to promote cellular biomass generation and growth. The TSC-TBC complex acts as a GTPase-activating protein (GAP) for the small GTPase RHEB, a direct activator of the protein kinase activity of mTORC1. In absence of nutrients, the TSC-TBC complex inhibits mTORC1, thereby preventing phosphorylation of ribosomal protein S6 kinase (RPS6KB1 and RPS6KB2) and EIF4EBP1 (4E-BP1) by the mTORC1 signaling. The TSC-TBC complex is inactivated in response to nutrients, relieving inhibition of mTORC1. Within the TSC-TBC complex, TSC1 stabilizes TSC2 and prevents TSC2 self-aggregation. Acts as a tumor suppressor. Involved in microtubule-mediated protein transport via its ability to regulate mTORC1 signaling. Also acts as a co-chaperone for HSP90AA1 facilitating HSP90AA1 chaperoning of protein clients such as kinases, TSC2 and glucocorticoid receptor NR3C1. Increases ATP binding to HSP90AA1 and inhibits HSP90AA1 ATPase activity. Competes with the activating co-chaperone AHSA1 for binding to HSP90AA1, thereby providing a reciprocal regulatory mechanism for chaperoning of client proteins. Recruits TSC2 to HSP90AA1 and stabilizes TSC2 by preventing the interaction between TSC2 and ubiquitin ligase HERC1. This Homo sapiens (Human) protein is Hamartin.